A 366-amino-acid polypeptide reads, in one-letter code: Chorismate synthase (366 aa).

Position 48 (R48) interacts with NADP(+). FMN-binding positions include 125-127, 238-239, G278, 293-297, and R319; these read RSS, NA, and KPTSS.

Belongs to the chorismate synthase family. Homotetramer. It depends on FMNH2 as a cofactor.

The catalysed reaction is 5-O-(1-carboxyvinyl)-3-phosphoshikimate = chorismate + phosphate. It functions in the pathway metabolic intermediate biosynthesis; chorismate biosynthesis; chorismate from D-erythrose 4-phosphate and phosphoenolpyruvate: step 7/7. Functionally, catalyzes the anti-1,4-elimination of the C-3 phosphate and the C-6 proR hydrogen from 5-enolpyruvylshikimate-3-phosphate (EPSP) to yield chorismate, which is the branch point compound that serves as the starting substrate for the three terminal pathways of aromatic amino acid biosynthesis. This reaction introduces a second double bond into the aromatic ring system. The polypeptide is Chorismate synthase (Alkalilimnicola ehrlichii (strain ATCC BAA-1101 / DSM 17681 / MLHE-1)).